The chain runs to 88 residues: Small ribosomal subunit protein bS20 (88 aa).

Residues 1–28 (MANTSSAKKATRKIARRTAVNKSRRTQM) are disordered.

Functionally, binds directly to 16S ribosomal RNA. The polypeptide is Small ribosomal subunit protein bS20 (Rhodopseudomonas palustris (strain ATCC BAA-98 / CGA009)).